The primary structure comprises 566 residues: Serine/threonine-protein kinase PknE (566 aa).

Residues M1 to W337 lie on the Cytoplasmic side of the membrane. S7 is modified (phosphoserine; by autocatalysis). Position 11 is a phosphothreonine; by autocatalysis (T11). A Protein kinase domain is found at Y16–L275. ATP contacts are provided by residues V22–V30 and K45. 2 positions are modified to phosphothreonine; by autocatalysis: T50 and T59. D139 functions as the Proton acceptor in the catalytic mechanism. T170, T175, and T178 each carry phosphothreonine; by autocatalysis. Residues P296–P330 form a disordered region. Residues L338 to L358 traverse the membrane as a helical segment. Over A359–G566 the chain is Extracellular.

Belongs to the protein kinase superfamily. Ser/Thr protein kinase family. Post-translationally, autophosphorylated on serine and threonine residues. Dephosphorylated by PstP.

The protein localises to the cell membrane. The enzyme catalyses L-seryl-[protein] + ATP = O-phospho-L-seryl-[protein] + ADP + H(+). It catalyses the reaction L-threonyl-[protein] + ATP = O-phospho-L-threonyl-[protein] + ADP + H(+). This Mycobacterium bovis (strain ATCC BAA-935 / AF2122/97) protein is Serine/threonine-protein kinase PknE (pknE).